The sequence spans 295 residues: Shikimate dehydrogenase (NADP(+)) (295 aa).

Residues 20-22 and Thr68 each bind shikimate; that span reads SWS. Lys72 serves as the catalytic Proton acceptor. Residues Asn93 and Asp108 each coordinate shikimate. Residues 132–136 and Met234 contribute to the NADP(+) site; that span reads GNGGA. Tyr236 is a binding site for shikimate. Gly257 lines the NADP(+) pocket.

The protein belongs to the shikimate dehydrogenase family. Homodimer.

It carries out the reaction shikimate + NADP(+) = 3-dehydroshikimate + NADPH + H(+). It functions in the pathway metabolic intermediate biosynthesis; chorismate biosynthesis; chorismate from D-erythrose 4-phosphate and phosphoenolpyruvate: step 4/7. Its function is as follows. Involved in the biosynthesis of the chorismate, which leads to the biosynthesis of aromatic amino acids. Catalyzes the reversible NADPH linked reduction of 3-dehydroshikimate (DHSA) to yield shikimate (SA). This is Shikimate dehydrogenase (NADP(+)) from Chlorobaculum tepidum (strain ATCC 49652 / DSM 12025 / NBRC 103806 / TLS) (Chlorobium tepidum).